Consider the following 273-residue polypeptide: Putative pyruvate, phosphate dikinase regulatory protein (273 aa).

153–160 (GVSRTSKT) serves as a coordination point for ADP.

Belongs to the pyruvate, phosphate/water dikinase regulatory protein family. PDRP subfamily.

The catalysed reaction is N(tele)-phospho-L-histidyl/L-threonyl-[pyruvate, phosphate dikinase] + ADP = N(tele)-phospho-L-histidyl/O-phospho-L-threonyl-[pyruvate, phosphate dikinase] + AMP + H(+). It carries out the reaction N(tele)-phospho-L-histidyl/O-phospho-L-threonyl-[pyruvate, phosphate dikinase] + phosphate + H(+) = N(tele)-phospho-L-histidyl/L-threonyl-[pyruvate, phosphate dikinase] + diphosphate. Its function is as follows. Bifunctional serine/threonine kinase and phosphorylase involved in the regulation of the pyruvate, phosphate dikinase (PPDK) by catalyzing its phosphorylation/dephosphorylation. This Sinorhizobium fredii (strain NBRC 101917 / NGR234) protein is Putative pyruvate, phosphate dikinase regulatory protein.